The chain runs to 421 residues: Replication-associated recombination protein A (421 aa).

45 to 52 serves as a coordination point for ATP; that stretch reads GPPGIGKT.

This sequence belongs to the AAA ATPase family. RarA/MGS1/WRNIP1 subfamily. As to quaternary structure, homotetramer. Interacts with single-stranded binding protein SsbA. May interact with PriA.

It is found in the cytoplasm. The protein resides in the nucleoid. SsDNA-dependent ATP hydrolysis is stimulated by single-stranded binding protein SsbA but not by SsbB; in the presence of SsbB, ssDNA secondary structure is removed and RarA's ATPase activity is decreased. The C-terminal 9 residues of SsbA are sufficient to stimulate ATPase activity. Plays a role in recombination-dependent DNA replication. Positively affects the formation of RecA threads during response to DNA damage, directly or indirectly counteracting the negative RecA modulators RecX and RecU. Stabilizes a RecA-ssDNA complex. In vitro, in the presence of SsbA, inhibits PriA-dependent DNA replication restart of both leading and lagging strands; elongation is insensitive to RarA. Plays a role in response to DNA damage, localizes to the replication fork but also to DNA elsewhere in the cell. Probably required for repair of single-stranded nicks generated by H(2)O(2). Epistatic to RecA, partially represses deletions of the error-prone translesion DNA polymerases (dinB1 and dinB2), genetically interacts with replicative helicase loaders dnaB and dnaD. Epistatic to recF and recO mutations upon DNA damage. A DNA-dependent ATPase stimulated by hairpin structures in circular single-stranded (ss)DNA or ssDNA-dsDNA junctions, by blunt end and 5'-tailed dsDNA and by single-stranded binding protein SsbA protein bound to ssDNA. Preferentially binds ssDNA and replication-fork structures; SsbA stimulates binding to ssDNA. Addition of ATP to the protein has no visible effect in vitro. The sequence is that of Replication-associated recombination protein A from Bacillus subtilis (strain 168).